A 574-amino-acid polypeptide reads, in one-letter code: Penicillin-binding protein activator LpoA (574 aa).

The N-terminal stretch at 1 to 25 is a signal peptide; that stretch reads MTILLQRAKFKKRLMPILFPLMLAG. A lipid anchor (N-palmitoyl cysteine) is attached at cysteine 26. A lipid anchor (S-diacylglycerol cysteine) is attached at cysteine 26.

The protein belongs to the LpoA family. As to quaternary structure, interacts with PBP1a.

It localises to the cell outer membrane. In terms of biological role, regulator of peptidoglycan synthesis that is essential for the function of penicillin-binding protein 1A (PBP1a). This is Penicillin-binding protein activator LpoA from Mannheimia succiniciproducens (strain KCTC 0769BP / MBEL55E).